The primary structure comprises 426 residues: Growth-regulating factor 9 (426 aa).

In terms of domain architecture, QLQ spans 92–127 (PFTPSQWMELEHQALIYKYLNAKAPIPSSLLISISK). A WRC domain is found at 151-195 (DPEPGRCRRTDGKKWRCSKEAMADHKYCERHINRNRHRSRKPVEN). Short sequence motifs (bipartite nuclear localization signal) lie at residues 156–166 (RCRRTDGKKWR) and 184–191 (RNRHRSRK). Residues 184 to 222 (RNRHRSRKPVENQSRKTVKETPCAGSLPSSVGQGSFKKA) are disordered. A compositionally biased stretch (basic and acidic residues) spans 191–202 (KPVENQSRKTVK).

Belongs to the GRF family.

The protein resides in the nucleus. Functionally, transcription activator that plays a regulatory role in gibberellin-induced stem elongation. This Oryza sativa subsp. japonica (Rice) protein is Growth-regulating factor 9 (GRF9).